Consider the following 90-residue polypeptide: Probable Fe(2+)-trafficking protein (90 aa).

It belongs to the Fe(2+)-trafficking protein family.

In terms of biological role, could be a mediator in iron transactions between iron acquisition and iron-requiring processes, such as synthesis and/or repair of Fe-S clusters in biosynthetic enzymes. This is Probable Fe(2+)-trafficking protein from Actinobacillus succinogenes (strain ATCC 55618 / DSM 22257 / CCUG 43843 / 130Z).